Consider the following 427-residue polypeptide: Retron Mx65 reverse transcriptase (427 aa).

Residues 136-366 (RHYSIHRPRE…GAQRVTGVTV (231 aa)) enclose the Reverse transcriptase domain. Residues Asp219, Asp315, and Asp316 each coordinate Mg(2+).

This sequence belongs to the bacterial reverse transcriptase family.

It carries out the reaction DNA(n) + a 2'-deoxyribonucleoside 5'-triphosphate = DNA(n+1) + diphosphate. Functionally, reverse transcriptase (RT) responsible for synthesis of msDNA-Mx65 (a branched molecule with RNA linked by a 2',5'-phosphodiester bond to ssDNA). The retron transcript serves as primer (from a conserved internal G residue) and template for the reaction, and codes for the RT. The retron is involved in antiviral defense. The chain is Retron Mx65 reverse transcriptase from Myxococcus xanthus.